The primary structure comprises 215 residues: Ribonuclease T (215 aa).

An Exonuclease domain is found at 20–194 (VVIDVETAGF…YDTERTAVLF (175 aa)). The Mg(2+) site is built by Asp23, Glu25, His181, and Asp186. The Proton donor/acceptor role is filled by His181.

Belongs to the RNase T family. Homodimer. The cofactor is Mg(2+).

Its function is as follows. Trims short 3' overhangs of a variety of RNA species, leaving a one or two nucleotide 3' overhang. Responsible for the end-turnover of tRNA: specifically removes the terminal AMP residue from uncharged tRNA (tRNA-C-C-A). Also appears to be involved in tRNA biosynthesis. The sequence is that of Ribonuclease T from Citrobacter koseri (strain ATCC BAA-895 / CDC 4225-83 / SGSC4696).